The following is a 99-amino-acid chain: MYIDNYLIMRKINMEETILSLTSYQLRPGKVDKKQFVLLIDVSSIRSYKVINALEDYFVNGKNRKEICDNHKINQGYLSLKIRELQDISLRIYNISHCI.

In terms of biological role, trans-acting protein involved in the regulation of the biogenesis of K99 fimbriae (FanC). This chain is Regulatory protein FanB (fanB), found in Escherichia coli.